The chain runs to 727 residues: Phosphoribosylformylglycinamidine synthase subunit PurL (727 aa).

The active site involves His47. ATP-binding residues include Tyr50 and Lys82. Residue Glu84 participates in Mg(2+) binding. Residues 85 to 88 and Arg107 each bind substrate; that span reads SHNH. Residue His86 is the Proton acceptor of the active site. Asp108 contributes to the Mg(2+) binding site. A substrate-binding site is contributed by Gln229. Asp257 provides a ligand contact to Mg(2+). Residue 301–303 participates in substrate binding; it reads ESQ. 2 residues coordinate ATP: Asp486 and Gly523. Mg(2+) is bound at residue Asn524. Ser526 lines the substrate pocket.

This sequence belongs to the FGAMS family. Monomer. Part of the FGAM synthase complex composed of 1 PurL, 1 PurQ and 2 PurS subunits.

The protein resides in the cytoplasm. The enzyme catalyses N(2)-formyl-N(1)-(5-phospho-beta-D-ribosyl)glycinamide + L-glutamine + ATP + H2O = 2-formamido-N(1)-(5-O-phospho-beta-D-ribosyl)acetamidine + L-glutamate + ADP + phosphate + H(+). The protein operates within purine metabolism; IMP biosynthesis via de novo pathway; 5-amino-1-(5-phospho-D-ribosyl)imidazole from N(2)-formyl-N(1)-(5-phospho-D-ribosyl)glycinamide: step 1/2. Its function is as follows. Part of the phosphoribosylformylglycinamidine synthase complex involved in the purines biosynthetic pathway. Catalyzes the ATP-dependent conversion of formylglycinamide ribonucleotide (FGAR) and glutamine to yield formylglycinamidine ribonucleotide (FGAM) and glutamate. The FGAM synthase complex is composed of three subunits. PurQ produces an ammonia molecule by converting glutamine to glutamate. PurL transfers the ammonia molecule to FGAR to form FGAM in an ATP-dependent manner. PurS interacts with PurQ and PurL and is thought to assist in the transfer of the ammonia molecule from PurQ to PurL. The protein is Phosphoribosylformylglycinamidine synthase subunit PurL of Petrotoga mobilis (strain DSM 10674 / SJ95).